The primary structure comprises 294 residues: Diaminopimelate epimerase (294 aa).

Residues Asn-11 and Asn-78 each contribute to the substrate site. Cys-87 (proton donor) is an active-site residue. Substrate-binding positions include 88-89 (GN), Asn-167, Asn-203, and 221-222 (ER). The Proton acceptor role is filled by Cys-230. 231–232 (GT) serves as a coordination point for substrate.

The protein belongs to the diaminopimelate epimerase family. In terms of assembly, homodimer.

The protein resides in the cytoplasm. It catalyses the reaction (2S,6S)-2,6-diaminopimelate = meso-2,6-diaminopimelate. It functions in the pathway amino-acid biosynthesis; L-lysine biosynthesis via DAP pathway; DL-2,6-diaminopimelate from LL-2,6-diaminopimelate: step 1/1. Its function is as follows. Catalyzes the stereoinversion of LL-2,6-diaminopimelate (L,L-DAP) to meso-diaminopimelate (meso-DAP), a precursor of L-lysine and an essential component of the bacterial peptidoglycan. In Mycolicibacterium paratuberculosis (strain ATCC BAA-968 / K-10) (Mycobacterium paratuberculosis), this protein is Diaminopimelate epimerase.